Consider the following 851-residue polypeptide: Internalin J (851 aa).

The signal sequence occupies residues 1 to 25 (MKTTKIVIASLVSLTMVSNPLLTFA). LRR repeat units follow at residues 94–115 (TLTS…EKLT), 116–136 (GLTK…SQNT), 137–157 (NLTY…TPLT), 158–179 (KLTY…QNPL), 180–200 (LTYL…HNTQ), 201–221 (LTEL…TPQT), 222–243 (QLTT…QNKL), 244–263 (LNRL…NQNI), 264–284 (QLTF…TPLT), 285–306 (QLTY…TLSK), 316–325 (DLLEIDLTHN), 338–357 (KIKE…DCQA), 359–368 (GITELDLSQN), and 380–402 (ELTE…NAHI). MucBP domains follow at residues 506-568 (PIKG…SQSV), 576-638 (IVAA…AQTV), 647-709 (APEK…SQTV), and 717-779 (IEAA…AQTV). Residues 786–825 (NTNTDQPLPTKKPTNTTPTKPSNLKTTEVKKASDTLPKTG) are disordered. Residues 792 to 811 (PLPTKKPTNTTPTKPSNLKT) are compositionally biased toward low complexity. An LPXTG sorting signal motif is present at residues 821 to 825 (LPKTG). Thr824 bears the Pentaglycyl murein peptidoglycan amidated threonine mark. Residues 825-851 (GDSAPWKSALLGVFLSSTALVIWKKKK) constitute a propeptide, removed by sortase A.

It belongs to the internalin family. In terms of assembly, nearly full-length mature protein and an internal LRR-containing fragment interact in vitro with human intestinal mucin-2 (MUC2) but not with mucin-1. LRR fragment binding is slightly better at pH 5.5, (the pH of the intestine) than at pH 7.4.

The protein resides in the secreted. It localises to the cell wall. With respect to regulation, despite being transcribed during bacterial growth in culture the protein is only detected in infected mice. Functionally, involved in several steps of L.monocytogenes infection by both intravenous and oral infection. Probably acts as an adhesion; upon ectopic expression in L.innocula bacteria adhere better to human cell lines. The polypeptide is Internalin J (inlJ) (Listeria monocytogenes serovar 1/2a (strain ATCC BAA-679 / EGD-e)).